Here is a 467-residue protein sequence, read N- to C-terminus: Bifunctional protein GlmU (467 aa).

The pyrophosphorylase stretch occupies residues 1–229 (MEKNTIILAA…FSESMGVNDR (229 aa)). UDP-N-acetyl-alpha-D-glucosamine contacts are provided by residues 8–11 (LAAG), lysine 22, glutamine 72, 77–78 (GT), 100–102 (SGD), glycine 139, glutamate 154, asparagine 169, and asparagine 227. Mg(2+) is bound at residue aspartate 102. Asparagine 227 is a binding site for Mg(2+). The interval 230 to 250 (LALSKATKVMQRRINEEHMVN) is linker. Residues 251-467 (GVTIIDPENT…ALKAEEENNK (217 aa)) form an N-acetyltransferase region. Arginine 332 and lysine 350 together coordinate UDP-N-acetyl-alpha-D-glucosamine. The active-site Proton acceptor is histidine 362. Tyrosine 365 and asparagine 376 together coordinate UDP-N-acetyl-alpha-D-glucosamine. Acetyl-CoA-binding positions include 385–386 (NY), serine 404, alanine 422, and arginine 439.

The protein in the N-terminal section; belongs to the N-acetylglucosamine-1-phosphate uridyltransferase family. This sequence in the C-terminal section; belongs to the transferase hexapeptide repeat family. In terms of assembly, homotrimer. The cofactor is Mg(2+).

It localises to the cytoplasm. It carries out the reaction alpha-D-glucosamine 1-phosphate + acetyl-CoA = N-acetyl-alpha-D-glucosamine 1-phosphate + CoA + H(+). The enzyme catalyses N-acetyl-alpha-D-glucosamine 1-phosphate + UTP + H(+) = UDP-N-acetyl-alpha-D-glucosamine + diphosphate. It participates in nucleotide-sugar biosynthesis; UDP-N-acetyl-alpha-D-glucosamine biosynthesis; N-acetyl-alpha-D-glucosamine 1-phosphate from alpha-D-glucosamine 6-phosphate (route II): step 2/2. It functions in the pathway nucleotide-sugar biosynthesis; UDP-N-acetyl-alpha-D-glucosamine biosynthesis; UDP-N-acetyl-alpha-D-glucosamine from N-acetyl-alpha-D-glucosamine 1-phosphate: step 1/1. The protein operates within bacterial outer membrane biogenesis; LPS lipid A biosynthesis. Its function is as follows. Catalyzes the last two sequential reactions in the de novo biosynthetic pathway for UDP-N-acetylglucosamine (UDP-GlcNAc). The C-terminal domain catalyzes the transfer of acetyl group from acetyl coenzyme A to glucosamine-1-phosphate (GlcN-1-P) to produce N-acetylglucosamine-1-phosphate (GlcNAc-1-P), which is converted into UDP-GlcNAc by the transfer of uridine 5-monophosphate (from uridine 5-triphosphate), a reaction catalyzed by the N-terminal domain. The polypeptide is Bifunctional protein GlmU (Pediococcus pentosaceus (strain ATCC 25745 / CCUG 21536 / LMG 10740 / 183-1w)).